The following is a 232-amino-acid chain: Probable dihydroorotate dehydrogenase B (NAD(+)), electron transfer subunit (232 aa).

The FAD-binding FR-type domain maps to Met-1–Pro-86. Cys-202, Cys-207, Cys-210, and Cys-219 together coordinate [2Fe-2S] cluster.

This sequence belongs to the PyrK family. As to quaternary structure, heterotetramer of 2 PyrK and 2 PyrD type B subunits. It depends on [2Fe-2S] cluster as a cofactor. Requires FAD as cofactor.

The protein operates within pyrimidine metabolism; UMP biosynthesis via de novo pathway; orotate from (S)-dihydroorotate (NAD(+) route): step 1/1. In terms of biological role, responsible for channeling the electrons from the oxidation of dihydroorotate from the FMN redox center in the PyrD type B subunit to the ultimate electron acceptor NAD(+). The chain is Probable dihydroorotate dehydrogenase B (NAD(+)), electron transfer subunit from Archaeoglobus fulgidus (strain ATCC 49558 / DSM 4304 / JCM 9628 / NBRC 100126 / VC-16).